The following is a 125-amino-acid chain: Temptin (125 aa).

Positions 1–22 (MEQKRTLRVFLAVSLLCALANA) are cleaved as a signal peptide. 2 disulfide bridges follow: Cys-40-Cys-125 and Cys-79-Cys-99. The segment at 78–125 (LCDMDSDGDGRSNGVELGDPECVWSQGETPARTTDLSHPGFDEATVSC) is disordered. A compositionally biased stretch (polar residues) spans 103-113 (QGETPARTTDL).

As to quaternary structure, binds to attractin and enticin. In terms of tissue distribution, produced by the albumen gland of the egg cordons.

Its subcellular location is the secreted. Functionally, a component of the complex of water-borne protein pheromones that stimulates attraction and mating behavior. Modulates pheromone signaling by direct binding to attractin. This Aplysia californica (California sea hare) protein is Temptin.